A 338-amino-acid polypeptide reads, in one-letter code: Mitotic spindle-associated protein SHE1 (338 aa).

A compositionally biased stretch (basic and acidic residues) spans methionine 1–threonine 14. Disordered stretches follow at residues methionine 1 to aspartate 29, leucine 67 to tyrosine 88, and histidine 116 to threonine 146. Polar residues predominate over residues glutamate 72–tyrosine 88. A Phosphoserine modification is found at serine 165. Disordered stretches follow at residues threonine 210–asparagine 263 and arginine 284–arginine 338. The span at isoleucine 216–arginine 234 shows a compositional bias: low complexity. The span at serine 242–glutamate 254 shows a compositional bias: basic and acidic residues. Polar residues-rich tracts occupy residues arginine 284–alanine 297 and serine 312–threonine 330.

The protein belongs to the SHE1 family.

It localises to the cytoplasm. The protein resides in the cytoskeleton. Its subcellular location is the spindle. It is found in the bud neck. Its function is as follows. May have a role related to the spindle integrity function of the DAM1 complex, which is essential for proper chromosome segregation. Causes growth arrest when highly overexpressed. The polypeptide is Mitotic spindle-associated protein SHE1 (SHE1) (Saccharomyces cerevisiae (strain YJM789) (Baker's yeast)).